The following is a 359-amino-acid chain: Phospho-N-acetylmuramoyl-pentapeptide-transferase (359 aa).

10 consecutive transmembrane segments (helical) span residues 7-27 (RSLT…VNSY), 28-48 (IFNS…SLVI), 82-102 (MGGI…NNYV), 103-123 (DSVG…IGFL), 147-167 (ALIA…NPLI), 179-199 (IVIF…VNLT), 203-223 (DGLA…EIFI), 229-249 (LIIY…FLKY), 256-276 (IFMG…ISIL), and 337-357 (IVEN…VLKI).

It belongs to the glycosyltransferase 4 family. MraY subfamily. Requires Mg(2+) as cofactor.

It is found in the cell inner membrane. It carries out the reaction UDP-N-acetyl-alpha-D-muramoyl-L-alanyl-gamma-D-glutamyl-meso-2,6-diaminopimeloyl-D-alanyl-D-alanine + di-trans,octa-cis-undecaprenyl phosphate = di-trans,octa-cis-undecaprenyl diphospho-N-acetyl-alpha-D-muramoyl-L-alanyl-D-glutamyl-meso-2,6-diaminopimeloyl-D-alanyl-D-alanine + UMP. It participates in cell wall biogenesis; peptidoglycan biosynthesis. Functionally, catalyzes the initial step of the lipid cycle reactions in the biosynthesis of the cell wall peptidoglycan: transfers peptidoglycan precursor phospho-MurNAc-pentapeptide from UDP-MurNAc-pentapeptide onto the lipid carrier undecaprenyl phosphate, yielding undecaprenyl-pyrophosphoryl-MurNAc-pentapeptide, known as lipid I. The polypeptide is Phospho-N-acetylmuramoyl-pentapeptide-transferase (Prochlorococcus marinus subsp. pastoris (strain CCMP1986 / NIES-2087 / MED4)).